A 290-amino-acid polypeptide reads, in one-letter code: UPF0761 membrane protein YihY (290 aa).

The next 6 membrane-spanning stretches (helical) occupy residues 44-64, 104-124, 140-160, 183-203, 210-230, and 244-264; these read LLSLVPLVAVVFALFAAFPMF, VGACGLIVTALLLMYSIDSAL, FAVYWMILTLGPLLAGASLAI, IFPLLLSWISFWLLYSIVPTI, AIVGAFVAALLFEAGKKGFAL, and VLAVIPILFVWVYWTWCIVLL.

This sequence belongs to the UPF0761 family.

The protein localises to the cell inner membrane. This is UPF0761 membrane protein YihY from Escherichia coli O7:K1 (strain IAI39 / ExPEC).